Consider the following 624-residue polypeptide: MDLHYDCAESPAAEQPSGKINKTAFKLFGKRRSGSAMPTIFGVKNKGDGKGTGNIGMVRSKTLDGLADVVLESNKKEEPCTNAGAGQLNTEKSPKVVTINPDVSSDSSVAKSHSFFSLLKRNGKSENVKGELAEQKPGSRQKRGLKGLFNSMRWSKKDKSYKDDKEGASENQPGLILPSSLTASLECIKEETQKPLCEKEKSEEDIPADVPSVEHSGDVNTSAEENPLNGCVESPCPALITKEPQLEDPPVIQQVDNLYQLPDPEVETLPDNKDEDVTGDIPVNTVSIVEPECDVGQEIAAPDPTTVDPPSEPSFDRICLMLADVTSLKSFDSLTGCGDVIADQDDDGGSSKGSKVVPGNGKKVTSKKNANIVAYQGGGEEMASPEEADETYVQELFSMIPQSEGASEKPEKVNGTTQVTAREVKCSDSGRDRNTVKPSKLRQVPIRRKERGDQNSKGNEKRQCHRNSDEGYWDSTTLGQEEEEPRSVGKQALPRDSCSGDALYDLYTDPDESIPKAQAEEPPVSHSHSKPLSPVTASCPVKTASSNKESKIPISIKHLPVHTTNQGIDSGSGSAAGHSHPVKSELPRTKIPVSKVLVRRVSNKAITETAAGKRAIHDPARKHH.

Disordered stretches follow at residues Glu-77–Lys-111, Glu-126–Leu-177, Pro-195–Gly-230, Ala-342–Asn-369, and Phe-397–Arg-588. Over residues Asp-102–Lys-111 the composition is skewed to low complexity. 2 stretches are compositionally biased toward basic and acidic residues: residues Ser-155–Ala-168 and Pro-195–Glu-204. Residues Lys-352–Lys-363 show a composition bias toward low complexity. Composition is skewed to basic and acidic residues over residues Arg-422–Thr-435 and Glu-450–Asp-469.

It belongs to the Amer family.

The protein resides in the cell membrane. Negative regulator of the canonical Wnt signaling pathway involved in neuroectodermal patterning. Acts by specifically binding phosphatidylinositol 4,5-bisphosphate (PtdIns(4,5)P2), translocating to the cell membrane and interacting with key regulators of the canonical Wnt signaling pathway, such as components of the beta-catenin destruction complex. This Xenopus laevis (African clawed frog) protein is APC membrane recruitment protein 2 (amer2).